The primary structure comprises 249 residues: Leucyl/phenylalanyl-tRNA--protein transferase (249 aa).

The protein belongs to the L/F-transferase family.

Its subcellular location is the cytoplasm. The catalysed reaction is N-terminal L-lysyl-[protein] + L-leucyl-tRNA(Leu) = N-terminal L-leucyl-L-lysyl-[protein] + tRNA(Leu) + H(+). The enzyme catalyses N-terminal L-arginyl-[protein] + L-leucyl-tRNA(Leu) = N-terminal L-leucyl-L-arginyl-[protein] + tRNA(Leu) + H(+). It catalyses the reaction L-phenylalanyl-tRNA(Phe) + an N-terminal L-alpha-aminoacyl-[protein] = an N-terminal L-phenylalanyl-L-alpha-aminoacyl-[protein] + tRNA(Phe). Its function is as follows. Functions in the N-end rule pathway of protein degradation where it conjugates Leu, Phe and, less efficiently, Met from aminoacyl-tRNAs to the N-termini of proteins containing an N-terminal arginine or lysine. This Xanthomonas axonopodis pv. citri (strain 306) protein is Leucyl/phenylalanyl-tRNA--protein transferase.